A 425-amino-acid polypeptide reads, in one-letter code: MPPKKADGVKKARAPAKRKLAEEFPSGEVLTDNAKKKWKLGSAVGQGGFGLLYLANEDSSGPVTADAPYVIKVEPSDNGPLFSELKFYMRAAKPDLIGAWMKSKKMEYLGVPKYWGSGFHEKNGKRYRFMVMDRFGTDLQKLFEGNGKKFSRKLVLQLGLRLLDILEYIHDHEYVHADIKASNLLLSYTNPNQVFLVDYGLAYRYAPEGVPKEYKEDPKRCHDGTIEFTSIDAHKGVSPSRRADLEIMGYCMIQWLCSRLPWEDKLQDPLYVRDSKLRCRDNIDEFLKSCFASGNIPAEMGKFMQEVKVLGYTDRPDYDKLRGILQQGLKSIGSTDDKKLDFGVATNSTSLPSVKTPKRKKAEEKGQSADETDSTPAKKRRAPQKKEVNGAKKTASPAKRPVKKETQASSEPAVKKSRGRPKKNS.

Residues 38-329 (WKLGSAVGQG…KLRGILQQGL (292 aa)) enclose the Protein kinase domain. Residues 44 to 52 (VGQGGFGLL) and K72 contribute to the ATP site. The active-site Proton acceptor is D178. A disordered region spans residues 343–425 (GVATNSTSLP…KSRGRPKKNS (83 aa)). Positions 415–425 (KKSRGRPKKNS) are enriched in basic residues.

The protein belongs to the protein kinase superfamily. CK1 Ser/Thr protein kinase family. VRK subfamily.

It is found in the nucleus. The protein resides in the cytoplasm. It localises to the cajal body. The enzyme catalyses L-seryl-[protein] + ATP = O-phospho-L-seryl-[protein] + ADP + H(+). It catalyses the reaction L-threonyl-[protein] + ATP = O-phospho-L-threonyl-[protein] + ADP + H(+). Functionally, serine/threonine kinase involved in the regulation of key cellular processes including the cell cycle, nuclear condensation, transcription regulation, and DNA damage response. Controls chromatin organization and remodeling by mediating phosphorylation of histone H3 on 'Thr-4' and histone H2AX (H2aXT4ph). It also phosphorylates KAT5 in response to DNA damage, promoting KAT5 association with chromatin and histone acetyltransferase activity. Is involved in the regulation of cell cycle progression of neural progenitors, and is required for proper cortical neuronal migration. Is involved in neurite elongation and branching in motor neurons, and has an essential role in Cajal bodies assembly, acting through COIL phosphorylation and the control of coilin degradation. Involved in Golgi disassembly during the cell cycle: following phosphorylation by PLK3 during mitosis, it is required to induce Golgi fragmentation. Phosphorylates BANF1: disrupts its ability to bind DNA, reduces its binding to LEM domain-containing proteins and causes its relocalization from the nucleus to the cytoplasm. Phosphorylates TP53BP1 and p53/TP53 on 'Thr-18', preventing the interaction between p53/TP53 and MDM2. Phosphorylates ATF2 which activates its transcriptional activity. Phosphorylates JUN. This chain is Serine/threonine-protein kinase VRK1 (vrk1), found in Danio rerio (Zebrafish).